Here is a 476-residue protein sequence, read N- to C-terminus: Aspartyl/glutamyl-tRNA(Asn/Gln) amidotransferase subunit B (476 aa).

This sequence belongs to the GatB/GatE family. GatB subfamily. In terms of assembly, heterotrimer of A, B and C subunits.

The enzyme catalyses L-glutamyl-tRNA(Gln) + L-glutamine + ATP + H2O = L-glutaminyl-tRNA(Gln) + L-glutamate + ADP + phosphate + H(+). It catalyses the reaction L-aspartyl-tRNA(Asn) + L-glutamine + ATP + H2O = L-asparaginyl-tRNA(Asn) + L-glutamate + ADP + phosphate + 2 H(+). Functionally, allows the formation of correctly charged Asn-tRNA(Asn) or Gln-tRNA(Gln) through the transamidation of misacylated Asp-tRNA(Asn) or Glu-tRNA(Gln) in organisms which lack either or both of asparaginyl-tRNA or glutaminyl-tRNA synthetases. The reaction takes place in the presence of glutamine and ATP through an activated phospho-Asp-tRNA(Asn) or phospho-Glu-tRNA(Gln). The chain is Aspartyl/glutamyl-tRNA(Asn/Gln) amidotransferase subunit B from Vesicomyosocius okutanii subsp. Calyptogena okutanii (strain HA).